A 416-amino-acid chain; its full sequence is Adenylosuccinate synthetase (416 aa).

Residues 13–19 (GDEGKGK) and 41–43 (GHT) each bind GTP. Catalysis depends on aspartate 14, which acts as the Proton acceptor. Mg(2+) contacts are provided by aspartate 14 and glycine 41. IMP is bound by residues 14 to 17 (DEGK), 39 to 42 (NAGH), threonine 126, arginine 140, glutamine 220, threonine 235, and arginine 299. Residue histidine 42 is the Proton donor of the active site. Position 295–301 (295–301 (TTTGRPR)) interacts with substrate. Residues arginine 301, 327–329 (KLD), and 405–407 (STS) contribute to the GTP site.

This sequence belongs to the adenylosuccinate synthetase family. Homodimer. Mg(2+) is required as a cofactor.

Its subcellular location is the cytoplasm. It carries out the reaction IMP + L-aspartate + GTP = N(6)-(1,2-dicarboxyethyl)-AMP + GDP + phosphate + 2 H(+). It participates in purine metabolism; AMP biosynthesis via de novo pathway; AMP from IMP: step 1/2. Plays an important role in the de novo pathway of purine nucleotide biosynthesis. Catalyzes the first committed step in the biosynthesis of AMP from IMP. This chain is Adenylosuccinate synthetase, found in Sulfurovum sp. (strain NBC37-1).